An 822-amino-acid chain; its full sequence is Valine--tRNA ligase (822 aa).

A 'HIGH' region motif is present at residues 41-51; sequence PNVTGQLHLGH. The 'KMSKS' region signature appears at 511-515; it reads KMSKS. Lysine 514 contacts ATP. Residues 765-822 are a coiled coil; that stretch reads EQKGRELKEIQFLKSEILRAEKILTNKGFLEKAPREKIDLERTKLEKLKEKLAFYEKK.

The protein belongs to the class-I aminoacyl-tRNA synthetase family. ValS type 1 subfamily. Monomer.

Its subcellular location is the cytoplasm. It catalyses the reaction tRNA(Val) + L-valine + ATP = L-valyl-tRNA(Val) + AMP + diphosphate. Functionally, catalyzes the attachment of valine to tRNA(Val). As ValRS can inadvertently accommodate and process structurally similar amino acids such as threonine, to avoid such errors, it has a 'posttransfer' editing activity that hydrolyzes mischarged Thr-tRNA(Val) in a tRNA-dependent manner. The protein is Valine--tRNA ligase of Mesomycoplasma hyopneumoniae (strain 7448) (Mycoplasma hyopneumoniae).